Here is a 271-residue protein sequence, read N- to C-terminus: Dermonecrotic toxin LhSicTox-alphaIA2bv (271 aa).

Residue H3 is part of the active site. E23 and D25 together coordinate Mg(2+). 2 disulfides stabilise this stretch: C43/C49 and C45/C188. D83 contributes to the Mg(2+) binding site.

It belongs to the arthropod phospholipase D family. Class II subfamily. Requires Mg(2+) as cofactor. As to expression, expressed by the venom gland.

It localises to the secreted. It catalyses the reaction an N-(acyl)-sphingosylphosphocholine = an N-(acyl)-sphingosyl-1,3-cyclic phosphate + choline. The enzyme catalyses an N-(acyl)-sphingosylphosphoethanolamine = an N-(acyl)-sphingosyl-1,3-cyclic phosphate + ethanolamine. The catalysed reaction is a 1-acyl-sn-glycero-3-phosphocholine = a 1-acyl-sn-glycero-2,3-cyclic phosphate + choline. It carries out the reaction a 1-acyl-sn-glycero-3-phosphoethanolamine = a 1-acyl-sn-glycero-2,3-cyclic phosphate + ethanolamine. In terms of biological role, dermonecrotic toxins cleave the phosphodiester linkage between the phosphate and headgroup of certain phospholipids (sphingolipid and lysolipid substrates), forming an alcohol (often choline) and a cyclic phosphate. This toxin acts on sphingomyelin (SM). It may also act on ceramide phosphoethanolamine (CPE), lysophosphatidylcholine (LPC) and lysophosphatidylethanolamine (LPE), but not on lysophosphatidylserine (LPS), and lysophosphatidylglycerol (LPG). It acts by transphosphatidylation, releasing exclusively cyclic phosphate products as second products. Induces dermonecrosis, hemolysis, increased vascular permeability, edema, inflammatory response, and platelet aggregation. This chain is Dermonecrotic toxin LhSicTox-alphaIA2bv, found in Loxosceles hirsuta (Recluse spider).